A 224-amino-acid chain; its full sequence is MLRYLMVGSLLVLAGCASTEHKPIPDDPYYAPVVPEEPPVALEPTGSIFLDSQAASLYTDIRAHRVGDIITVVLTESTQATKSANNEIKKGSDLNMDAIQALGGPVTISGNPLSLGYSDSMNTKREADADQSNSLRGNISAHVLQVLANGNLVIRGEKWISINNGDEFIRVTGVIRPQDITTDNTVVSTRVANARIQYSGTGTFANSQQVGWLSQFFLSDWWPF.

The first 15 residues, 1 to 15 (MLRYLMVGSLLVLAG), serve as a signal peptide directing secretion. Cysteine 16 carries the N-palmitoyl cysteine lipid modification. Cysteine 16 carries S-diacylglycerol cysteine lipidation.

The protein belongs to the FlgH family. In terms of assembly, the basal body constitutes a major portion of the flagellar organelle and consists of four rings (L,P,S, and M) mounted on a central rod.

It is found in the cell outer membrane. The protein localises to the bacterial flagellum basal body. Its function is as follows. Assembles around the rod to form the L-ring and probably protects the motor/basal body from shearing forces during rotation. In Shewanella amazonensis (strain ATCC BAA-1098 / SB2B), this protein is Flagellar L-ring protein.